The chain runs to 361 residues: Histidinol-phosphate aminotransferase (361 aa).

Lys219 is modified (N6-(pyridoxal phosphate)lysine).

Belongs to the class-II pyridoxal-phosphate-dependent aminotransferase family. Histidinol-phosphate aminotransferase subfamily. In terms of assembly, homodimer. Pyridoxal 5'-phosphate serves as cofactor.

It catalyses the reaction L-histidinol phosphate + 2-oxoglutarate = 3-(imidazol-4-yl)-2-oxopropyl phosphate + L-glutamate. The protein operates within amino-acid biosynthesis; L-histidine biosynthesis; L-histidine from 5-phospho-alpha-D-ribose 1-diphosphate: step 7/9. The chain is Histidinol-phosphate aminotransferase from Cereibacter sphaeroides (strain ATCC 17023 / DSM 158 / JCM 6121 / CCUG 31486 / LMG 2827 / NBRC 12203 / NCIMB 8253 / ATH 2.4.1.) (Rhodobacter sphaeroides).